Reading from the N-terminus, the 229-residue chain is NAD-dependent protein deacylase (229 aa).

Residues 1–227 form the Deacetylase sirtuin-type domain; sequence MKNLVILSGA…QDLMPKLIEM (227 aa). 9-28 lines the NAD(+) pocket; sequence GAGISAESGIKTFRDADGLW. 2 residues coordinate substrate: Tyr-53 and Arg-56. Residue 86–89 coordinates NAD(+); it reads QNVD. His-104 serves as the catalytic Proton acceptor. 169–171 lines the NAD(+) pocket; that stretch reads GTS.

This sequence belongs to the sirtuin family. Class III subfamily.

The protein resides in the cytoplasm. It carries out the reaction N(6)-acetyl-L-lysyl-[protein] + NAD(+) + H2O = 2''-O-acetyl-ADP-D-ribose + nicotinamide + L-lysyl-[protein]. The enzyme catalyses N(6)-succinyl-L-lysyl-[protein] + NAD(+) + H2O = 2''-O-succinyl-ADP-D-ribose + nicotinamide + L-lysyl-[protein]. In terms of biological role, NAD-dependent lysine deacetylase and desuccinylase that specifically removes acetyl and succinyl groups on target proteins. Modulates the activities of several proteins which are inactive in their acylated form. This chain is NAD-dependent protein deacylase, found in Helicobacter pylori (strain ATCC 700392 / 26695) (Campylobacter pylori).